Here is a 334-residue protein sequence, read N- to C-terminus: Retinol dehydrogenase 14 (334 aa).

51-57 serves as a coordination point for NADP(+); it reads GANSGLG. S190 lines the substrate pocket. Catalysis depends on Y215, which acts as the Proton acceptor.

Belongs to the short-chain dehydrogenases/reductases (SDR) family.

It catalyses the reaction all-trans-retinol + NADP(+) = all-trans-retinal + NADPH + H(+). The catalysed reaction is 11-cis-retinol + NADP(+) = 11-cis-retinal + NADPH + H(+). The enzyme catalyses 9-cis-retinol + NADP(+) = 9-cis-retinal + NADPH + H(+). Its function is as follows. Retinol dehydrogenase with a clear preference for NADP. Displays high activity towards 9-cis, 11-cis and all-trans-retinol. Shows a very weak activity towards 13-cis-retinol. Has no activity towards steroids. This chain is Retinol dehydrogenase 14 (Rdh14), found in Mus musculus (Mouse).